Here is an 834-residue protein sequence, read N- to C-terminus: Arf-GAP with coiled-coil, ANK repeat and PH domain-containing protein 3 (834 aa).

One can recognise a PH domain in the interval 268–363; sequence GVVMEGYLFK…WVQAVQASIA (96 aa). The disordered stretch occupies residues 375–400; that stretch reads SERLDRTASPSTSSIDSATDTRERGV. The span at 382–392 shows a compositional bias: polar residues; the sequence is ASPSTSSIDSA. The 123-residue stretch at 403–525 folds into the Arf-GAP domain; sequence ESVLQRVQSV…KFLRKAPMAP (123 aa). The segment at 418-441 adopts a C4-type zinc-finger fold; that stretch reads CGDCGQPDPRWASINLGVLLCIEC. The segment at 633-653 is disordered; it reads SVTEEEGAESEESSGEADGDT. The span at 634–653 shows a compositional bias: acidic residues; sequence VTEEEGAESEESSGEADGDT. 3 ANK repeats span residues 702-731, 735-764, and 768-797; these read EGKTPLVQAVLGGSLIVCEFLLQNGADVNQ, RGRAPLHHATLLGRTGQVCLFLKRGADQHA, and EQRDPLAIAVQAANADIVTLLRLARMAEEM.

In terms of biological role, GTPase-activating protein for the ADP ribosylation factor family. In Homo sapiens (Human), this protein is Arf-GAP with coiled-coil, ANK repeat and PH domain-containing protein 3 (ACAP3).